A 983-amino-acid polypeptide reads, in one-letter code: UPF0182 protein MLBr00644 (983 aa).

Transmembrane regions (helical) follow at residues 19–39 (LIMV…LVDA), 63–83 (VVVF…GLAV), 113–133 (LIGV…AQSY), 175–195 (FVAV…FGGI), 210–230 (LQLV…YWLD), 259–279 (KLIL…AITL), and 287–307 (IGLV…PLIV).

The protein belongs to the UPF0182 family.

The protein localises to the cell membrane. The protein is UPF0182 protein MLBr00644 of Mycobacterium leprae (strain Br4923).